The primary structure comprises 339 residues: 5-dehydro-2-deoxygluconokinase (339 aa).

This sequence belongs to the carbohydrate kinase PfkB family.

It catalyses the reaction 5-dehydro-2-deoxy-D-gluconate + ATP = 6-phospho-5-dehydro-2-deoxy-D-gluconate + ADP + H(+). Its pathway is polyol metabolism; myo-inositol degradation into acetyl-CoA; acetyl-CoA from myo-inositol: step 5/7. Its function is as follows. Catalyzes the phosphorylation of 5-dehydro-2-deoxy-D-gluconate (2-deoxy-5-keto-D-gluconate or DKG) to 6-phospho-5-dehydro-2-deoxy-D-gluconate (DKGP). The polypeptide is 5-dehydro-2-deoxygluconokinase (Clostridium tetani (strain Massachusetts / E88)).